The primary structure comprises 550 residues: Methionine--tRNA ligase (550 aa).

The 'HIGH' region signature appears at 13–23 (PYANGPLHFGH). Zn(2+) is bound by residues Cys145, Cys148, Cys158, and Cys161. Positions 331–335 (QFSKS) match the 'KMSKS' region motif. ATP is bound at residue Lys334.

It belongs to the class-I aminoacyl-tRNA synthetase family. MetG type 1 subfamily. As to quaternary structure, monomer. Zn(2+) serves as cofactor.

It is found in the cytoplasm. The enzyme catalyses tRNA(Met) + L-methionine + ATP = L-methionyl-tRNA(Met) + AMP + diphosphate. Functionally, is required not only for elongation of protein synthesis but also for the initiation of all mRNA translation through initiator tRNA(fMet) aminoacylation. The protein is Methionine--tRNA ligase of Chlamydia trachomatis serovar A (strain ATCC VR-571B / DSM 19440 / HAR-13).